Reading from the N-terminus, the 539-residue chain is Membrane protein insertase YidC (539 aa).

Residues 7–27 traverse the membrane as a helical segment; it reads IIAIALSFVVLVGWSYLADHM. A disordered region spans residues 32 to 64; the sequence is QPAPQAQQEETAPSASQAAPQSASQAAAPAPRA. The next 3 membrane-spanning stretches (helical) occupy residues 347 to 367, 418 to 438, and 498 to 518; these read YVGN…LVFW, GGCL…QALL, and IMMF…SGLV.

It belongs to the OXA1/ALB3/YidC family. Type 1 subfamily. Interacts with the Sec translocase complex via SecD. Specifically interacts with transmembrane segments of nascent integral membrane proteins during membrane integration.

It localises to the cell inner membrane. Functionally, required for the insertion and/or proper folding and/or complex formation of integral membrane proteins into the membrane. Involved in integration of membrane proteins that insert both dependently and independently of the Sec translocase complex, as well as at least some lipoproteins. Aids folding of multispanning membrane proteins. The sequence is that of Membrane protein insertase YidC from Nitratidesulfovibrio vulgaris (strain DSM 19637 / Miyazaki F) (Desulfovibrio vulgaris).